Reading from the N-terminus, the 579-residue chain is 6-deoxy-6-sulfo-D-gluconate dehydratase (579 aa).

[4Fe-4S] cluster-binding residues include cysteine 59, cysteine 127, and cysteine 200.

It belongs to the IlvD/Edd family. As to quaternary structure, homodimer. [4Fe-4S] cluster serves as cofactor.

The enzyme catalyses 6-deoxy-6-sulfo-D-gluconate = 2-dehydro-3,6-dideoxy-6-sulfo-D-gluconate + H2O. Its function is as follows. Catalyzes the dehydration of 6-deoxy-6-sulfo-D-gluconate to 2-dehydro-3,6-dideoxy-6-sulfo-D-gluconate. Is involved in a degradation pathway of sulfoquinovose (SQ) that allows P.putida SQ1 to use SQ as the sole carbon and energy source for growth. This chain is 6-deoxy-6-sulfo-D-gluconate dehydratase, found in Pseudomonas putida (Arthrobacter siderocapsulatus).